The sequence spans 364 residues: Probable protein phosphatase methylesterase 1 (364 aa).

Residues 1–53 (MSDDKLDTLPDLQSETSHVTTPHRQNDLLRQAVTHGRPPPVPSTSTSGKKREM) form a disordered region. Residues 11–23 (DLQSETSHVTTPH) show a composition bias toward polar residues. Residues Ser164, Asp190, and His316 contribute to the active site.

The protein belongs to the AB hydrolase superfamily.

It carries out the reaction [phosphatase 2A protein]-C-terminal L-leucine methyl ester + H2O = [phosphatase 2A protein]-C-terminal L-leucine + methanol + H(+). In terms of biological role, demethylates proteins that have been reversibly carboxymethylated. This chain is Probable protein phosphatase methylesterase 1, found in Caenorhabditis elegans.